A 281-amino-acid chain; its full sequence is Ethylene-inducing xylanase 1 (281 aa).

A signal peptide spans 1-19 (MVSYKAFLITLAAVTRVLT). Asn23 carries an N-linked (GlcNAc...) asparagine glycan. Residues 32 to 220 (SGTPSSTGTS…SSGSSDITVG (189 aa)) enclose the GH11 domain. Residue Glu116 is the Nucleophile of the active site. The active-site Proton donor is the Glu207. The CBM1 domain occupies 246–281 (TCGALYSQCGGTGFTGSQCCASGTCKYANSYYSQCL).

This sequence belongs to the glycosyl hydrolase 11 (cellulase G) family.

It catalyses the reaction Endohydrolysis of (1-&gt;4)-beta-D-xylosidic linkages in xylans.. Its pathway is glycan degradation; xylan degradation. Endo-1,4-beta-xylanase involved in the hydrolysis of xylan, a major structural heterogeneous polysaccharide found in plant biomass representing the second most abundant polysaccharide in the biosphere, after cellulose. May act as an elicitor of plant defense responses in certain plants but does not exhibit any cell death when transiently expressed in N.benthamiana. The chain is Ethylene-inducing xylanase 1 from Botryotinia fuckeliana (strain B05.10) (Noble rot fungus).